We begin with the raw amino-acid sequence, 433 residues long: Putative wall-associated receptor kinase-like 16 (433 aa).

A signal peptide spans 1–22 (MKLQHVVYLVAIFFVVAIFVIA). At 23–29 (CIEENKY) the chain is on the extracellular side. A helical transmembrane segment spans residues 30–50 (LVWIMIILANTTNILSLVRSI). The Cytoplasmic portion of the chain corresponds to 51–433 (SYIKNIRKHQ…VARFDIEAGR (383 aa)). The residue at position 97 (Thr97) is a Phosphothreonine. The Protein kinase domain maps to 108-391 (YDVSRILGQG…RAKTTKHNWL (284 aa)). ATP contacts are provided by residues 114-122 (LGQGGQWTV) and Lys136. Tyr181 bears the Phosphotyrosine mark. Asp233 functions as the Proton acceptor in the catalytic mechanism. A phosphothreonine mark is found at Thr267 and Thr272. Position 280 is a phosphotyrosine (Tyr280).

This sequence belongs to the protein kinase superfamily. Ser/Thr protein kinase family.

The protein localises to the membrane. It catalyses the reaction L-seryl-[protein] + ATP = O-phospho-L-seryl-[protein] + ADP + H(+). It carries out the reaction L-threonyl-[protein] + ATP = O-phospho-L-threonyl-[protein] + ADP + H(+). Functionally, putative serine/threonine-protein kinase that may function as a signaling receptor of extracellular matrix component. The sequence is that of Putative wall-associated receptor kinase-like 16 (WAKL16) from Arabidopsis thaliana (Mouse-ear cress).